A 424-amino-acid polypeptide reads, in one-letter code: L-glutamine:scyllo-inosose aminotransferase (424 aa).

The tract at residues 1-21 (MDSSLAISGGPRLSNREWPRW) is disordered. N6-(pyridoxal phosphate)lysine is present on lysine 202.

It belongs to the DegT/DnrJ/EryC1 family. L-glutamine:2-deoxy-scyllo-inosose/scyllo-inosose aminotransferase subfamily. Homodimer. Pyridoxal 5'-phosphate is required as a cofactor.

It catalyses the reaction scyllo-inosose + L-glutamine = 1-amino-1-deoxy-scyllo-inositol + 2-oxoglutaramate. It functions in the pathway antibiotic biosynthesis; streptomycin biosynthesis. Catalyzes the PLP-dependent transamination of scyllo-inosose to form scyllo-inosamine. This Streptomyces griseus protein is L-glutamine:scyllo-inosose aminotransferase (stsC).